Consider the following 166-residue polypeptide: Phosphopantetheine adenylyltransferase (166 aa).

Thr9 contacts substrate. Residues 9–10 (TF) and His17 each bind ATP. Substrate contacts are provided by Lys41, Leu78, and Arg92. Residues 93 to 95 (GLR), Glu103, and 128 to 134 (HQAIASK) each bind ATP.

This sequence belongs to the bacterial CoaD family. In terms of assembly, homohexamer. Mg(2+) serves as cofactor.

It is found in the cytoplasm. The catalysed reaction is (R)-4'-phosphopantetheine + ATP + H(+) = 3'-dephospho-CoA + diphosphate. Its pathway is cofactor biosynthesis; coenzyme A biosynthesis; CoA from (R)-pantothenate: step 4/5. Reversibly transfers an adenylyl group from ATP to 4'-phosphopantetheine, yielding dephospho-CoA (dPCoA) and pyrophosphate. This Roseobacter denitrificans (strain ATCC 33942 / OCh 114) (Erythrobacter sp. (strain OCh 114)) protein is Phosphopantetheine adenylyltransferase.